Consider the following 158-residue polypeptide: Cyclic pyranopterin monophosphate synthase (158 aa).

Residues 76 to 78 (LCH) and 114 to 115 (ME) contribute to the substrate site. Residue aspartate 129 is part of the active site.

Belongs to the MoaC family. As to quaternary structure, homohexamer; trimer of dimers.

The enzyme catalyses (8S)-3',8-cyclo-7,8-dihydroguanosine 5'-triphosphate = cyclic pyranopterin phosphate + diphosphate. It participates in cofactor biosynthesis; molybdopterin biosynthesis. Catalyzes the conversion of (8S)-3',8-cyclo-7,8-dihydroguanosine 5'-triphosphate to cyclic pyranopterin monophosphate (cPMP). In Shewanella frigidimarina (strain NCIMB 400), this protein is Cyclic pyranopterin monophosphate synthase.